The sequence spans 378 residues: MIHFSINKNLFLQALNITKRAISSKNAIPILSTVKIDVTNEGVTLIGSNGQISIENFISQKNEDAGLLITSLGSILLEASFFINVVSSLPDVTLDFKEIEQNQIVLTSGKSEITLKGKDSEQYPRIQEISASTPLILETKLLKKIINETAFAASTQESRPILTGVHFVLSQHKELKTVATDSHRLSQKKLTLEKNSDDFDVVIPSRSLREFSAVFTDDIETVEIFFANNQILFRSENISFYTRLLEGNYPDTDRLIPTDFNTTITFNVVNLRQSMERARLLSSATQNGTVKLEIKDGVVSAHVHSPEVGKVNEEIDTDQVTGEDLTISFNPTYLIDSLKALNSEKVTISFISAVRPFTLVPADTDEDFMQLITPVRTN.

The protein belongs to the beta sliding clamp family. In terms of assembly, forms a ring-shaped head-to-tail homodimer around DNA which binds and tethers DNA polymerases and other proteins to the DNA. The DNA replisome complex has a single clamp-loading complex (3 tau and 1 each of delta, delta', psi and chi subunits) which binds 3 Pol III cores (1 core on the leading strand and 2 on the lagging strand) each with a beta sliding clamp dimer. Additional proteins in the replisome are other copies of gamma, psi and chi, Ssb, DNA helicase and RNA primase.

The protein resides in the cytoplasm. In terms of biological role, confers DNA tethering and processivity to DNA polymerases and other proteins. Acts as a clamp, forming a ring around DNA (a reaction catalyzed by the clamp-loading complex) which diffuses in an ATP-independent manner freely and bidirectionally along dsDNA. Initially characterized for its ability to contact the catalytic subunit of DNA polymerase III (Pol III), a complex, multichain enzyme responsible for most of the replicative synthesis in bacteria; Pol III exhibits 3'-5' exonuclease proofreading activity. The beta chain is required for initiation of replication as well as for processivity of DNA replication. The chain is Beta sliding clamp (dnaN) from Streptococcus pneumoniae (strain ATCC BAA-255 / R6).